The sequence spans 582 residues: Aspartate--tRNA ligase (582 aa).

Residues 198-201 (QIFK) are aspartate. Arginine 220 provides a ligand contact to L-aspartate. Residues 220-222 (RDE) and glutamine 229 each bind ATP. Residue histidine 445 participates in L-aspartate binding. Glutamate 479 contacts ATP. Position 486 (arginine 486) interacts with L-aspartate. 531-534 (GFDR) serves as a coordination point for ATP.

It belongs to the class-II aminoacyl-tRNA synthetase family. Type 1 subfamily. Homodimer.

The protein localises to the cytoplasm. The enzyme catalyses tRNA(Asp) + L-aspartate + ATP = L-aspartyl-tRNA(Asp) + AMP + diphosphate. Functionally, catalyzes the attachment of L-aspartate to tRNA(Asp) in a two-step reaction: L-aspartate is first activated by ATP to form Asp-AMP and then transferred to the acceptor end of tRNA(Asp). The chain is Aspartate--tRNA ligase from Amoebophilus asiaticus (strain 5a2).